The sequence spans 674 residues: Forkhead box protein P1 (674 aa).

Positions 1–19 are enriched in polar residues; sequence MMQESGTETKSNGSAIQNG. The segment at 1 to 44 is disordered; sequence MMQESGTETKSNGSAIQNGSSGGNHLLECGSLREGRSNGETPAV. Ser82 is modified (phosphoserine). Positions 269–281 are enriched in polar residues; sequence MNPHASTNGQLSV. Residues 269–296 form a disordered region; that stretch reads MNPHASTNGQLSVHTPKRESLSHEEHPH. Positions 284 to 296 are enriched in basic and acidic residues; that stretch reads PKRESLSHEEHPH. Residue Lys285 forms a Glycyl lysine isopeptide (Lys-Gly) (interchain with G-Cter in SUMO2) linkage. Residues 304–329 form a C2H2-type zinc finger; it reads GVCKWPGCEAVCEDFQSFLKHLNSEH. The interval 346–367 is leucine-zipper; sequence VQQLELQLAKDKERLQAMMTHL. Glycyl lysine isopeptide (Lys-Gly) (interchain with G-Cter in SUMO2) cross-links involve residues Lys370 and Lys375. Residues 380 to 384 are CTBP1-binding; it reads PLNLV. A compositionally biased stretch (polar residues) spans 388–401; that stretch reads TLSKSASEASPQSL. The disordered stretch occupies residues 388–427; it reads TLSKSASEASPQSLPHTPTTPTAPITPATQGPSVITTTSM. The segment covering 402–419 has biased composition (low complexity); it reads PHTPTTPTAPITPATQGP. Lys440 participates in a covalent cross-link: Glycyl lysine isopeptide (Lys-Gly) (interchain with G-Cter in SUMO2). The segment at residues 462–552 is a DNA-binding region (fork-head); the sequence is RPPFTYASLI…PQKISGNPSL (91 aa). The segment at 608–674 is disordered; sequence EHTNSNESDS…EDEPVNEDME (67 aa). The segment covering 609-620 has biased composition (polar residues); sequence HTNSNESDSSPG. Thr650 carries the post-translational modification Phosphothreonine. Residue Ser655 is modified to Phosphoserine. A compositionally biased stretch (acidic residues) spans 664–674; sequence YEDEPVNEDME.

Forms homodimers and heterodimers with FOXP2 and FOXP4. Dimerization is required for DNA-binding. Self-associates. Interacts with CTBP1. Interacts with NCOR2 and AR. Interacts with FOXP2. Interacts with TBR1. Interacts with AURKA; this interaction facilitates the phosphorylation of FOXP1, which suppresses the expression of FBXL7. Interacts with ZMYM2.

Its subcellular location is the nucleus. Functionally, transcriptional repressor. Can act with CTBP1 to synergistically repress transcription but CTPBP1 is not essential. Plays an important role in the specification and differentiation of lung epithelium. Acts cooperatively with FOXP4 to regulate lung secretory epithelial cell fate and regeneration by restricting the goblet cell lineage program; the function may involve regulation of AGR2. Essential transcriptional regulator of B-cell development. Involved in regulation of cardiac muscle cell proliferation. Involved in the columnar organization of spinal motor neurons. Promotes the formation of the lateral motor neuron column (LMC) and the preganglionic motor column (PGC) and is required for respective appropriate motor axon projections. The segment-appropriate generation of spinal cord motor columns requires cooperation with other Hox proteins. Can regulate PITX3 promoter activity; may promote midbrain identity in embryonic stem cell-derived dopamine neurons by regulating PITX3. Negatively regulates the differentiation of T follicular helper cells T(FH)s. Involved in maintenance of hair follicle stem cell quiescence; the function probably involves regulation of FGF18. Represses transcription of various pro-apoptotic genes and cooperates with NF-kappa B-signaling in promoting B-cell expansion by inhibition of caspase-dependent apoptosis. Binds to CSF1R promoter elements and is involved in regulation of monocyte differentiation and macrophage functions; repression of CSF1R in monocytes seems to involve NCOR2 as corepressor. Involved in endothelial cell proliferation, tube formation and migration indicative for a role in angiogenesis; the role in neovascularization seems to implicate suppression of SEMA5B. Can negatively regulate androgen receptor signaling. Acts as a transcriptional activator of the FBXL7 promoter; this activity is regulated by AURKA. The protein is Forkhead box protein P1 (FOXP1) of Bos taurus (Bovine).